Consider the following 475-residue polypeptide: Ribulose bisphosphate carboxylase large chain (475 aa).

The propeptide occupies 1–2; that stretch reads MS. N-acetylproline is present on Pro-3. At Lys-14 the chain carries N6,N6,N6-trimethyllysine. Residues Asn-123 and Thr-173 each coordinate substrate. Lys-175 serves as the catalytic Proton acceptor. Residue Lys-177 participates in substrate binding. Mg(2+)-binding residues include Lys-201, Asp-203, and Glu-204. At Lys-201 the chain carries N6-carboxylysine. His-294 (proton acceptor) is an active-site residue. Substrate-binding residues include Arg-295, His-327, and Ser-379.

This sequence belongs to the RuBisCO large chain family. Type I subfamily. As to quaternary structure, heterohexadecamer of 8 large chains and 8 small chains; disulfide-linked. The disulfide link is formed within the large subunit homodimers. Requires Mg(2+) as cofactor. In terms of processing, the disulfide bond which can form in the large chain dimeric partners within the hexadecamer appears to be associated with oxidative stress and protein turnover.

It localises to the plastid. It is found in the chloroplast. It carries out the reaction 2 (2R)-3-phosphoglycerate + 2 H(+) = D-ribulose 1,5-bisphosphate + CO2 + H2O. The catalysed reaction is D-ribulose 1,5-bisphosphate + O2 = 2-phosphoglycolate + (2R)-3-phosphoglycerate + 2 H(+). Functionally, ruBisCO catalyzes two reactions: the carboxylation of D-ribulose 1,5-bisphosphate, the primary event in carbon dioxide fixation, as well as the oxidative fragmentation of the pentose substrate in the photorespiration process. Both reactions occur simultaneously and in competition at the same active site. The protein is Ribulose bisphosphate carboxylase large chain of Magnolia acuminata (Cucumber tree).